The chain runs to 380 residues: Cytochrome b (380 aa).

Helical transmembrane passes span 33-53, 77-98, 113-133, and 178-198; these read FGSL…FLAM, WLIR…YLHV, WNIG…GYVL, and FFAF…IHLL. Histidine 83 and histidine 97 together coordinate heme b. Residues histidine 182 and histidine 196 each contribute to the heme b site. Residue histidine 201 participates in a ubiquinone binding. 4 helical membrane-spanning segments follow: residues 226-246, 288-308, 320-340, and 347-367; these read YKDL…ALFS, LGGV…PMLH, LSQI…WIGG, and FVLI…IALP.

The protein belongs to the cytochrome b family. In terms of assembly, the cytochrome bc1 complex contains 3 respiratory subunits (MT-CYB, CYC1 and UQCRFS1), 2 core proteins (UQCRC1 and UQCRC2) and probably 6 low-molecular weight proteins. The cofactor is heme b.

The protein resides in the mitochondrion inner membrane. Functionally, component of the ubiquinol-cytochrome c reductase complex (complex III or cytochrome b-c1 complex) that is part of the mitochondrial respiratory chain. The b-c1 complex mediates electron transfer from ubiquinol to cytochrome c. Contributes to the generation of a proton gradient across the mitochondrial membrane that is then used for ATP synthesis. This chain is Cytochrome b (mt-cyb), found in Acipenser persicus (Persian sturgeon).